A 296-amino-acid polypeptide reads, in one-letter code: Nucleotide-binding protein M28_Spy0517 (296 aa).

13–20 provides a ligand contact to ATP; it reads GMSGAGKT. GTP is bound at residue 63 to 66; that stretch reads DMRS.

This sequence belongs to the RapZ-like family.

In terms of biological role, displays ATPase and GTPase activities. The polypeptide is Nucleotide-binding protein M28_Spy0517 (Streptococcus pyogenes serotype M28 (strain MGAS6180)).